The following is a 178-amino-acid chain: Large ribosomal subunit protein uL6 (178 aa).

It belongs to the universal ribosomal protein uL6 family. Part of the 50S ribosomal subunit.

Functionally, this protein binds to the 23S rRNA, and is important in its secondary structure. It is located near the subunit interface in the base of the L7/L12 stalk, and near the tRNA binding site of the peptidyltransferase center. The sequence is that of Large ribosomal subunit protein uL6 from Campylobacter lari (strain RM2100 / D67 / ATCC BAA-1060).